Reading from the N-terminus, the 688-residue chain is Translation initiation factor IF-2 (688 aa).

Basic and acidic residues-rich tracts occupy residues 53 to 62 and 86 to 95; these read GKEKSEKTKE and KRDDKNEKVN. The interval 53–100 is disordered; that stretch reads GKEKSEKTKEEDDEIETTAKNPIKESMNNKKSNKRDDKNEKVNTENAE. In terms of domain architecture, tr-type G spans 187–354; sequence KRSPIITVMG…MILLSSEILE (168 aa). Residues 196–203 are G1; that stretch reads GHVDHGKT. Residue 196–203 coordinates GTP; that stretch reads GHVDHGKT. The G2 stretch occupies residues 221–225; the sequence is GITQH. Positions 242–245 are G3; the sequence is DTPG. GTP contacts are provided by residues 242-246 and 296-299; these read DTPGH and NKID. Residues 296-299 form a G4 region; sequence NKID. A G5 region spans residues 332 to 334; it reads SAH.

Belongs to the TRAFAC class translation factor GTPase superfamily. Classic translation factor GTPase family. IF-2 subfamily.

It localises to the cytoplasm. In terms of biological role, one of the essential components for the initiation of protein synthesis. Protects formylmethionyl-tRNA from spontaneous hydrolysis and promotes its binding to the 30S ribosomal subunits. Also involved in the hydrolysis of GTP during the formation of the 70S ribosomal complex. The polypeptide is Translation initiation factor IF-2 (Clostridium botulinum (strain ATCC 19397 / Type A)).